The chain runs to 21 residues: Chlorophyllase type 2 (21 aa).

This sequence belongs to the AB hydrolase superfamily. Lipase family.

The enzyme catalyses a chlorophyll + H2O = a chlorophyllide + phytol + H(+). Its pathway is porphyrin-containing compound metabolism; chlorophyll degradation. Functionally, catalyzes the hydrolysis of ester bond in chlorophyll to yield chlorophyllide and phytol. This Chenopodium album (Fat hen) protein is Chlorophyllase type 2.